Consider the following 289-residue polypeptide: Protease HtpX homolog (289 aa).

2 consecutive transmembrane segments (helical) span residues 7-26 (TAAL…YWVI) and 31-48 (GLII…FSWY). Residue His132 participates in Zn(2+) binding. Glu133 is an active-site residue. His136 lines the Zn(2+) pocket. 2 helical membrane-spanning segments follow: residues 151–171 (VAGA…FGGG) and 182–202 (LGVL…QLAI). Glu207 serves as a coordination point for Zn(2+).

Belongs to the peptidase M48B family. It depends on Zn(2+) as a cofactor.

The protein localises to the cell inner membrane. This is Protease HtpX homolog from Nostoc punctiforme (strain ATCC 29133 / PCC 73102).